A 1585-amino-acid polypeptide reads, in one-letter code: Sterol 3-beta-glucosyltransferase (1585 aa).

The span at 1 to 18 shows a compositional bias: pro residues; that stretch reads MSPPISPTPPPLQPPFPP. Disordered stretches follow at residues 1 to 151, 177 to 225, and 249 to 279; these read MSPP…ESSF, PWEE…PTHT, and YQYA…LPKG. 3 stretches are compositionally biased toward polar residues: residues 65 to 92, 105 to 123, and 132 to 148; these read DQAT…NAIT, DAQT…STHE, and PRTS…QMAE. The segment covering 178–194 has biased composition (acidic residues); that stretch reads WEEDDDSDDGEDDDEFI. The span at 255–273 shows a compositional bias: low complexity; sequence ETSSRRTSAAGSESSSEGE. Positions 387-555 constitute a GRAM 1 domain; that stretch reads ERLMEVFGLE…EAIVDVEKSP (169 aa). One can recognise a PH domain in the interval 438-530; that stretch reads LLVKSGPLHK…WVKAIQKVMF (93 aa). Disordered stretches follow at residues 625 to 645 and 666 to 852; these read TSHA…LGMA and DGEP…GSES. Residues 670-689 are compositionally biased toward basic and acidic residues; that stretch reads LEEHSQGPHHNDEDASHLPH. Composition is skewed to polar residues over residues 760–785, 806–817, and 827–840; these read TDSS…QASV, NKPSVVDSNSAE, and SWTS…QMVK. The GRAM 2 domain maps to 862–933; that stretch reads RKFRTFFALS…RDLYGLKAQK (72 aa). Residues Ser1043, Arg1044, Asp1046, Ile1358, His1360, His1373, Gly1377, Thr1378, Asp1397, and Gln1398 each coordinate UDP-alpha-D-glucose. Positions 1499–1552 are disordered; sequence NRVRSRSRSRSRSSQGRFSPRRHTVDDDGWSVVSGGSRSRSGSASAVTSPERRP. The span at 1529–1545 shows a compositional bias: low complexity; the sequence is SVVSGGSRSRSGSASAV.

Belongs to the glycosyltransferase 28 family.

It is found in the cytoplasm. The protein localises to the membrane. It carries out the reaction a sterol + UDP-alpha-D-glucose = a sterol 3-beta-D-glucoside + UDP + H(+). It catalyses the reaction ergosterol + UDP-alpha-D-glucose = ergosteryl 3-beta-D-glucoside + UDP + H(+). Functionally, sterol glycosyltransferase responsible for the glycosylation of ergosterol to form ergosterol-glucoside. The chain is Sterol 3-beta-glucosyltransferase from Cryptococcus neoformans var. neoformans serotype D (strain B-3501A) (Filobasidiella neoformans).